The following is a 146-amino-acid chain: Nucleoside diphosphate kinase (146 aa).

Residues K11, F59, R87, T93, R104, and N114 each coordinate ATP. H117 serves as the catalytic Pros-phosphohistidine intermediate.

This sequence belongs to the NDK family. As to quaternary structure, homotetramer. Requires Mg(2+) as cofactor.

The protein localises to the cytoplasm. The catalysed reaction is a 2'-deoxyribonucleoside 5'-diphosphate + ATP = a 2'-deoxyribonucleoside 5'-triphosphate + ADP. It carries out the reaction a ribonucleoside 5'-diphosphate + ATP = a ribonucleoside 5'-triphosphate + ADP. In terms of biological role, major role in the synthesis of nucleoside triphosphates other than ATP. The ATP gamma phosphate is transferred to the NDP beta phosphate via a ping-pong mechanism, using a phosphorylated active-site intermediate. The chain is Nucleoside diphosphate kinase from Anaeromyxobacter sp. (strain Fw109-5).